The sequence spans 93 residues: Small ribosomal subunit protein uS19 (93 aa).

The protein belongs to the universal ribosomal protein uS19 family.

Functionally, protein S19 forms a complex with S13 that binds strongly to the 16S ribosomal RNA. The protein is Small ribosomal subunit protein uS19 of Cutibacterium acnes (strain DSM 16379 / KPA171202) (Propionibacterium acnes).